Reading from the N-terminus, the 304-residue chain is UDP-N-acetylenolpyruvoylglucosamine reductase (304 aa).

An FAD-binding PCMH-type domain is found at 34-198 (IGGKADFLVW…LEVVFALQPG (165 aa)). The active site involves Arg-177. Ser-227 (proton donor) is an active-site residue. The active site involves Glu-297.

Belongs to the MurB family. Requires FAD as cofactor.

It is found in the cytoplasm. It carries out the reaction UDP-N-acetyl-alpha-D-muramate + NADP(+) = UDP-N-acetyl-3-O-(1-carboxyvinyl)-alpha-D-glucosamine + NADPH + H(+). Its pathway is cell wall biogenesis; peptidoglycan biosynthesis. Functionally, cell wall formation. The protein is UDP-N-acetylenolpyruvoylglucosamine reductase of Geobacillus thermodenitrificans (strain NG80-2).